The sequence spans 421 residues: D-amino acid dehydrogenase (421 aa).

Position 3-17 (3-17 (ILILGSGVVGTASAY)) interacts with FAD.

This sequence belongs to the DadA oxidoreductase family. It depends on FAD as a cofactor.

The catalysed reaction is a D-alpha-amino acid + A + H2O = a 2-oxocarboxylate + AH2 + NH4(+). It functions in the pathway amino-acid degradation; D-alanine degradation; NH(3) and pyruvate from D-alanine: step 1/1. In terms of biological role, oxidative deamination of D-amino acids. In Xanthobacter autotrophicus (strain ATCC BAA-1158 / Py2), this protein is D-amino acid dehydrogenase.